Here is a 271-residue protein sequence, read N- to C-terminus: ATP synthase subunit a (271 aa).

The next 5 membrane-spanning stretches (helical) occupy residues 31–51 (WDTI…GLYM), 89–109 (FVAP…WIGV), 124–144 (DINL…IVSL), 186–206 (IFSG…VLWL), and 216–236 (LGVG…YYAF). The disordered stretch occupies residues 247–271 (DEHADGGDSSSRQASPTPLPAGQVR).

The protein belongs to the ATPase A chain family. As to quaternary structure, F-type ATPases have 2 components, CF(1) - the catalytic core - and CF(0) - the membrane proton channel. CF(1) has five subunits: alpha(3), beta(3), gamma(1), delta(1), epsilon(1). CF(0) has three main subunits: a(1), b(2) and c(9-12). The alpha and beta chains form an alternating ring which encloses part of the gamma chain. CF(1) is attached to CF(0) by a central stalk formed by the gamma and epsilon chains, while a peripheral stalk is formed by the delta and b chains.

The protein resides in the cell membrane. Its function is as follows. Key component of the proton channel; it plays a direct role in the translocation of protons across the membrane. In Acidothermus cellulolyticus (strain ATCC 43068 / DSM 8971 / 11B), this protein is ATP synthase subunit a.